The chain runs to 438 residues: Lipid-A-disaccharide synthase (438 aa).

Belongs to the LpxB family.

It carries out the reaction a lipid X + a UDP-2-N,3-O-bis[(3R)-3-hydroxyacyl]-alpha-D-glucosamine = a lipid A disaccharide + UDP + H(+). The protein operates within bacterial outer membrane biogenesis; LPS lipid A biosynthesis. Functionally, condensation of UDP-2,3-diacylglucosamine and 2,3-diacylglucosamine-1-phosphate to form lipid A disaccharide, a precursor of lipid A, a phosphorylated glycolipid that anchors the lipopolysaccharide to the outer membrane of the cell. The polypeptide is Lipid-A-disaccharide synthase (Xanthomonas campestris pv. campestris (strain 8004)).